The chain runs to 399 residues: Cytochrome P450 FAS1 (399 aa).

Heme is bound at residue Cys-349.

The protein belongs to the cytochrome P450 family. It depends on heme as a cofactor.

Its subcellular location is the cytoplasm. In terms of biological role, may be involved in the biosynthesis of cytokinin phytohormones and in host plant fasciation (leafy gall). The protein is Cytochrome P450 FAS1 (fas1) of Rhodococcoides fascians (Rhodococcus fascians).